Consider the following 100-residue polypeptide: NAD(P)H-quinone oxidoreductase subunit 4L, chloroplastic (100 aa).

3 helical membrane passes run 1-21, 31-51, and 60-80; these read MLEH…YGLI, MCLE…SDFF, and IFSI…PAIL.

It belongs to the complex I subunit 4L family. As to quaternary structure, NDH is composed of at least 16 different subunits, 5 of which are encoded in the nucleus.

The protein resides in the plastid. It localises to the chloroplast thylakoid membrane. The enzyme catalyses a plastoquinone + NADH + (n+1) H(+)(in) = a plastoquinol + NAD(+) + n H(+)(out). It carries out the reaction a plastoquinone + NADPH + (n+1) H(+)(in) = a plastoquinol + NADP(+) + n H(+)(out). Its function is as follows. NDH shuttles electrons from NAD(P)H:plastoquinone, via FMN and iron-sulfur (Fe-S) centers, to quinones in the photosynthetic chain and possibly in a chloroplast respiratory chain. The immediate electron acceptor for the enzyme in this species is believed to be plastoquinone. Couples the redox reaction to proton translocation, and thus conserves the redox energy in a proton gradient. The chain is NAD(P)H-quinone oxidoreductase subunit 4L, chloroplastic from Cucumis sativus (Cucumber).